We begin with the raw amino-acid sequence, 562 residues long: Tubby-related protein 2 (562 aa).

Residues 1 to 81 (MDREGPRGPR…RRGEERFQSD (81 aa)) form a disordered region. Basic and acidic residues predominate over residues 35-46 (QKLEQQRQLFEK). Residues serine 152, serine 153, and serine 155 each carry the phosphoserine modification. Positions 179–294 (LRRGWLASPG…SNHNAWNMTC (116 aa)) are disordered. Threonine 211 carries the phosphothreonine modification. Serine 213 carries the phosphoserine modification. Basic and acidic residues predominate over residues 225–240 (DGDHGDLAPCKVEENT). Residues 285–294 (SNHNAWNMTC) are compositionally biased toward polar residues.

Belongs to the TUB family. In terms of tissue distribution, expressed in retina and testis.

The protein resides in the cytoplasm. It is found in the secreted. The sequence is that of Tubby-related protein 2 (Tulp2) from Mus musculus (Mouse).